The following is a 274-amino-acid chain: Bis(5'-nucleosyl)-tetraphosphatase, symmetrical (274 aa).

This sequence belongs to the Ap4A hydrolase family.

It carries out the reaction P(1),P(4)-bis(5'-adenosyl) tetraphosphate + H2O = 2 ADP + 2 H(+). Its function is as follows. Hydrolyzes diadenosine 5',5'''-P1,P4-tetraphosphate to yield ADP. The sequence is that of Bis(5'-nucleosyl)-tetraphosphatase, symmetrical from Buchnera aphidicola subsp. Acyrthosiphon pisum (strain 5A).